The sequence spans 244 residues: Ribonuclease PH (244 aa).

Phosphate is bound by residues arginine 90 and 128–130; that span reads GTR.

It belongs to the RNase PH family. Homohexameric ring arranged as a trimer of dimers.

The enzyme catalyses tRNA(n+1) + phosphate = tRNA(n) + a ribonucleoside 5'-diphosphate. In terms of biological role, phosphorolytic 3'-5' exoribonuclease that plays an important role in tRNA 3'-end maturation. Removes nucleotide residues following the 3'-CCA terminus of tRNAs; can also add nucleotides to the ends of RNA molecules by using nucleoside diphosphates as substrates, but this may not be physiologically important. Probably plays a role in initiation of 16S rRNA degradation (leading to ribosome degradation) during starvation. The sequence is that of Ribonuclease PH from Cutibacterium acnes (strain DSM 16379 / KPA171202) (Propionibacterium acnes).